A 247-amino-acid chain; its full sequence is Adenosylcobinamide-GDP ribazoletransferase (247 aa).

4 consecutive transmembrane segments (helical) span residues 34 to 54 (IITF…VFMV), 59 to 79 (CGVP…TGGF), 113 to 133 (GGLA…ELAL), and 194 to 214 (VLLP…AIFI).

This sequence belongs to the CobS family. Mg(2+) serves as cofactor.

It localises to the cell inner membrane. It catalyses the reaction alpha-ribazole + adenosylcob(III)inamide-GDP = adenosylcob(III)alamin + GMP + H(+). It carries out the reaction alpha-ribazole 5'-phosphate + adenosylcob(III)inamide-GDP = adenosylcob(III)alamin 5'-phosphate + GMP + H(+). The protein operates within cofactor biosynthesis; adenosylcobalamin biosynthesis; adenosylcobalamin from cob(II)yrinate a,c-diamide: step 7/7. Functionally, joins adenosylcobinamide-GDP and alpha-ribazole to generate adenosylcobalamin (Ado-cobalamin). Also synthesizes adenosylcobalamin 5'-phosphate from adenosylcobinamide-GDP and alpha-ribazole 5'-phosphate. The protein is Adenosylcobinamide-GDP ribazoletransferase of Escherichia coli (strain ATCC 8739 / DSM 1576 / NBRC 3972 / NCIMB 8545 / WDCM 00012 / Crooks).